Reading from the N-terminus, the 301-residue chain is Phosphatidylcholine:diacylglycerol cholinephosphotransferase 1 (301 aa).

Residues 1–39 (MSAAAAETDVSLRRRSNSLNGNHTNGVAIDGTLDNNNRR) are disordered. The next 5 helical transmembrane spans lie at 88-108 (HWIP…EYTL), 141-161 (VLAA…VWTW), 171-191 (IAAL…QLPL), 202-222 (FPVG…GSMI), and 255-275 (GHYT…DSLA). Catalysis depends on residues His-216, His-256, and Asp-260.

The protein belongs to the phosphatidylcholine:diacylglycerol cholinephosphotransferase family.

It localises to the membrane. The catalysed reaction is 1,2-ditetradecanoyl-sn-glycero-3-phosphocholine + 1,2-di-(9Z-octadecenoyl)-sn-glycerol = 1,2-ditetradecanoyl-sn-glycerol + 1,2-di-(9Z-octadecenoyl)-sn-glycero-3-phosphocholine. Functions as a phosphatidylcholine:diacylglycerol cholinephosphotransferase that catalyzes the transfer of the phosphocholine headgroup from phosphatidylcholine (PC) to diacylglycerol, a major reaction for the transfer of 18:1 into phosphatidylcholine for desaturation and also for the reverse transfer of 18:2 and 18:3 into the triacylglycerols synthesis pathway. This chain is Phosphatidylcholine:diacylglycerol cholinephosphotransferase 1, found in Arabidopsis thaliana (Mouse-ear cress).